A 372-amino-acid polypeptide reads, in one-letter code: 4-hydroxy-3-methylbut-2-en-1-yl diphosphate synthase (flavodoxin) (372 aa).

Residues C270, C273, C305, and E312 each coordinate [4Fe-4S] cluster.

The protein belongs to the IspG family. [4Fe-4S] cluster serves as cofactor.

The catalysed reaction is (2E)-4-hydroxy-3-methylbut-2-enyl diphosphate + oxidized [flavodoxin] + H2O + 2 H(+) = 2-C-methyl-D-erythritol 2,4-cyclic diphosphate + reduced [flavodoxin]. It participates in isoprenoid biosynthesis; isopentenyl diphosphate biosynthesis via DXP pathway; isopentenyl diphosphate from 1-deoxy-D-xylulose 5-phosphate: step 5/6. Converts 2C-methyl-D-erythritol 2,4-cyclodiphosphate (ME-2,4cPP) into 1-hydroxy-2-methyl-2-(E)-butenyl 4-diphosphate. This is 4-hydroxy-3-methylbut-2-en-1-yl diphosphate synthase (flavodoxin) from Vibrio vulnificus (strain CMCP6).